The following is a 463-amino-acid chain: MSDGTQKLWGGRFTGETDPLMHLYNASLPYDYKMYKADLEGTKVYTAGLQKLGLLTDAELAKIHEGLAEIQKEWDADKFVRHPNDEDIHTANERRLGEIIGREIAGKVHTGRSRNDQVVTDLRIYCRDVVNDTLFPALKGLVDVLIKRAEGEIDILMPGYTHLQRAQPIRWSHWLSSYATYFTEDYKRLGQILHRLNQSPLGAGALAGHPYGIDREFLAEGLGFNSVIGNSLVAVSDRDFIVELMFWGTLFMNHISRFAEDLIIYCTAEFGFIQLSDAYSTGSSLMPQKKNADSLELLRGKSGRVFGDLTGFLMSLKGIPSTYDKDMQEDKEPLFDCLTTVEHSMLIATGVISTLTVNKDKMEAALTMDMLATDLADYLVRKGVPFRETHHISGECVATAENLGLSGIDKLTLEQYQKIDSRFAEDLFETFNFEQSVERRNATGGTAKSAVLKQLNNLKSQLN.

Positions 27, 115, and 161 each coordinate 2-(N(omega)-L-arginino)succinate. The active-site Proton acceptor is the H162. S283 acts as the Proton donor in catalysis. Positions 291, 323, 328, and 331 each coordinate 2-(N(omega)-L-arginino)succinate.

This sequence belongs to the lyase 1 family. Argininosuccinate lyase subfamily. As to quaternary structure, homotetramer.

The enzyme catalyses 2-(N(omega)-L-arginino)succinate = fumarate + L-arginine. It functions in the pathway amino-acid biosynthesis; L-arginine biosynthesis; L-arginine from L-ornithine and carbamoyl phosphate: step 3/3. The polypeptide is Argininosuccinate lyase (ARG4) (Saccharomyces paradoxus (Yeast)).